A 479-amino-acid polypeptide reads, in one-letter code: Ribulose bisphosphate carboxylase large chain (479 aa).

The propeptide occupies 1 to 2 (MS). The substrate site is built by Asn123 and Thr173. The Proton acceptor role is filled by Lys175. Lys177 contacts substrate. Mg(2+) is bound by residues Lys201, Asp203, and Glu204. At Lys201 the chain carries N6-carboxylysine. Ser208 is subject to Phosphoserine. His294 serves as the catalytic Proton acceptor. Arg295 and His327 together coordinate substrate. A Phosphothreonine modification is found at Thr330. Ser379 is a substrate binding site.

Belongs to the RuBisCO large chain family. Type I subfamily. In terms of assembly, heterohexadecamer of 8 large chains and 8 small chains; disulfide-linked. The disulfide link is formed within the large subunit homodimers. Mg(2+) serves as cofactor. The disulfide bond which can form in the large chain dimeric partners within the hexadecamer appears to be associated with oxidative stress and protein turnover.

The protein resides in the plastid. It is found in the chloroplast. It carries out the reaction 2 (2R)-3-phosphoglycerate + 2 H(+) = D-ribulose 1,5-bisphosphate + CO2 + H2O. It catalyses the reaction D-ribulose 1,5-bisphosphate + O2 = 2-phosphoglycolate + (2R)-3-phosphoglycerate + 2 H(+). RuBisCO catalyzes two reactions: the carboxylation of D-ribulose 1,5-bisphosphate, the primary event in carbon dioxide fixation, as well as the oxidative fragmentation of the pentose substrate in the photorespiration process. Both reactions occur simultaneously and in competition at the same active site. The protein is Ribulose bisphosphate carboxylase large chain of Arabis hirsuta (Hairy rock-cress).